A 196-amino-acid chain; its full sequence is Beta-crystallin A4 (196 aa).

An N-acetylthreonine modification is found at threonine 2. The N-terminal arm stretch occupies residues 2–11 (TLQCTKSAGH). 2 Beta/gamma crystallin 'Greek key' domains span residues 12–51 (WRVVVWDEEGFQGRRHEFTAECPSVLDLGFETVRSLKVLS) and 52–98 (GAWV…RPVA). The tract at residues 99–104 (CANHRD) is connecting peptide. Beta/gamma crystallin 'Greek key' domains lie at 105–146 (SRLT…HVQS) and 147–195 (GAWV…RRIQ).

As to quaternary structure, homo/heterodimer, or complexes of higher-order. The structure of beta-crystallin oligomers seems to be stabilized through interactions between the N-terminal arms.

In terms of biological role, crystallins are the dominant structural components of the vertebrate eye lens. The sequence is that of Beta-crystallin A4 (Cryba4) from Rattus norvegicus (Rat).